Here is a 173-residue protein sequence, read N- to C-terminus: Adenine phosphoribosyltransferase (173 aa).

It belongs to the purine/pyrimidine phosphoribosyltransferase family. As to quaternary structure, homodimer.

It is found in the cytoplasm. It carries out the reaction AMP + diphosphate = 5-phospho-alpha-D-ribose 1-diphosphate + adenine. It functions in the pathway purine metabolism; AMP biosynthesis via salvage pathway; AMP from adenine: step 1/1. In terms of biological role, catalyzes a salvage reaction resulting in the formation of AMP, that is energically less costly than de novo synthesis. In Desulfosudis oleivorans (strain DSM 6200 / JCM 39069 / Hxd3) (Desulfococcus oleovorans), this protein is Adenine phosphoribosyltransferase.